Reading from the N-terminus, the 211-residue chain is Potassium-transporting ATPase KdpC subunit (211 aa).

The chain crosses the membrane as a helical span at residues Val-13–Phe-35.

Belongs to the KdpC family. As to quaternary structure, the system is composed of three essential subunits: KdpA, KdpB and KdpC.

It localises to the cell membrane. In terms of biological role, part of the high-affinity ATP-driven potassium transport (or Kdp) system, which catalyzes the hydrolysis of ATP coupled with the electrogenic transport of potassium into the cytoplasm. This subunit acts as a catalytic chaperone that increases the ATP-binding affinity of the ATP-hydrolyzing subunit KdpB by the formation of a transient KdpB/KdpC/ATP ternary complex. This chain is Potassium-transporting ATPase KdpC subunit, found in Myxococcus xanthus.